The sequence spans 331 residues: tRNA (guanine-N(7)-)-methyltransferase (331 aa).

Residues Glu-29, Glu-55, and Asp-105 each coordinate S-adenosyl-L-methionine. Asp-105 is an active-site residue. Lys-109 and Asp-141 together coordinate substrate.

The protein belongs to the class I-like SAM-binding methyltransferase superfamily. TrmB family.

It carries out the reaction guanosine(46) in tRNA + S-adenosyl-L-methionine = N(7)-methylguanosine(46) in tRNA + S-adenosyl-L-homocysteine. It functions in the pathway tRNA modification; N(7)-methylguanine-tRNA biosynthesis. In terms of biological role, catalyzes the formation of N(7)-methylguanine at position 46 (m7G46) in tRNA. The chain is tRNA (guanine-N(7)-)-methyltransferase from Deinococcus geothermalis (strain DSM 11300 / CIP 105573 / AG-3a).